A 161-amino-acid polypeptide reads, in one-letter code: Urease accessory protein UreE (161 aa).

The protein belongs to the UreE family. In terms of assembly, homodimer.

The protein resides in the cytoplasm. In terms of biological role, involved in urease metallocenter assembly. Binds nickel. Probably functions as a nickel donor during metallocenter assembly. It is not essential for urease activity. In Proteus mirabilis (strain HI4320), this protein is Urease accessory protein UreE.